The primary structure comprises 432 residues: Glutamyl-tRNA reductase (432 aa).

Substrate is bound by residues 49-52 (TCNR), Ser101, 106-108 (ESQ), and Gln112. Residue Cys50 is the Nucleophile of the active site. 181 to 186 (GTGETI) serves as a coordination point for NADP(+).

It belongs to the glutamyl-tRNA reductase family. As to quaternary structure, homodimer.

It catalyses the reaction (S)-4-amino-5-oxopentanoate + tRNA(Glu) + NADP(+) = L-glutamyl-tRNA(Glu) + NADPH + H(+). The protein operates within porphyrin-containing compound metabolism; protoporphyrin-IX biosynthesis; 5-aminolevulinate from L-glutamyl-tRNA(Glu): step 1/2. Functionally, catalyzes the NADPH-dependent reduction of glutamyl-tRNA(Glu) to glutamate 1-semialdehyde (GSA). This chain is Glutamyl-tRNA reductase, found in Xylella fastidiosa (strain M12).